The following is a 380-amino-acid chain: Succinyl-diaminopimelate desuccinylase (380 aa).

Residue histidine 69 coordinates Zn(2+). Residue aspartate 71 is part of the active site. Aspartate 102 lines the Zn(2+) pocket. Glutamate 135 functions as the Proton acceptor in the catalytic mechanism. 3 residues coordinate Zn(2+): glutamate 136, glutamate 164, and histidine 353.

Belongs to the peptidase M20A family. DapE subfamily. In terms of assembly, homodimer. Zn(2+) is required as a cofactor. Requires Co(2+) as cofactor.

It carries out the reaction N-succinyl-(2S,6S)-2,6-diaminopimelate + H2O = (2S,6S)-2,6-diaminopimelate + succinate. It participates in amino-acid biosynthesis; L-lysine biosynthesis via DAP pathway; LL-2,6-diaminopimelate from (S)-tetrahydrodipicolinate (succinylase route): step 3/3. Functionally, catalyzes the hydrolysis of N-succinyl-L,L-diaminopimelic acid (SDAP), forming succinate and LL-2,6-diaminopimelate (DAP), an intermediate involved in the bacterial biosynthesis of lysine and meso-diaminopimelic acid, an essential component of bacterial cell walls. The chain is Succinyl-diaminopimelate desuccinylase from Cereibacter sphaeroides (strain ATCC 17029 / ATH 2.4.9) (Rhodobacter sphaeroides).